Reading from the N-terminus, the 424-residue chain is MNLSILAALALVSFSTASTEQQSPLFSHADRSPKSIIDASPFLSLHRDLVSIPSVSGNESAVGEFLASFLESHNFNVIKQPVEGRTSRFNVFAYPSSAPSKPSILLTSHIDTVPPFIPYSVQYSDNERDIVISGRGCDDAKGSVAAQVVAALETLAENPSAPLALLFVVDEEVGGAGMRAFSFNTTLNPSPDSPSSLVDGYKTIIFGEPTDLALVSGHKGMLSFHVHVTGKSSHSGYPWLGESALSTILPALSVIDKLGDIPVEKGGLPSSEKYGRTTVNIGRVEAGVAGNVVPAAADADVTVRLAAGTPEEAMDIVLAAVANATGDNPHVVVKFAEGPNGGVGGYAPQDLDTDVPGFEITTVNYGTDVPNLKVYEENDVKRYLYGPGSIHVAHGDHESITVAQLEEAVKGYKKLITAALERIY.

Residues 1–17 (MNLSILAALALVSFSTA) form the signal peptide. The N-linked (GlcNAc...) asparagine glycan is linked to N58. Zn(2+) is bound at residue D139. Catalysis depends on E171, which acts as the Proton acceptor. E172 contacts Zn(2+). Residues N184 and N323 are each glycosylated (N-linked (GlcNAc...) asparagine).

It belongs to the peptidase M20A family. The cofactor is Zn(2+).

It localises to the secreted. The protein is Probable carboxypeptidase AN5749 of Emericella nidulans (strain FGSC A4 / ATCC 38163 / CBS 112.46 / NRRL 194 / M139) (Aspergillus nidulans).